A 272-amino-acid chain; its full sequence is MTDLHSLLIAFILGVVEGLTEFLPVSSTGHMIIVGHWLGFVDEKAKTFEVIIQLGSILAVVVMFWRRLFGLIGIHFGEVPHEGHTAGRLKLTHILLAMIPAVVLGLVFHDVIKSLFYPQNVMYALVVGGFLLLAAEWLKPKKPRAVGLDDITHRQAFMIGCFQCLALWPGFSRSGATISGGMLVGVSRYAASEFSFILAVPMMMGATVLDLYKSWHFLSLSDVPMFAVGFVTAFLVALIAIKTFLKIIKRISFVPFAIYRFIVAGVVYMVFM.

Transmembrane regions (helical) follow at residues 6 to 26 (SLLIAFILGVVEGLTEFLPVS), 45 to 65 (AKTFEVIIQLGSILAVVVMFW), 92 to 112 (THILLAMIPAVVLGLVFHDVI), 115 to 135 (LFYPQNVMYALVVGGFLLLAA), 189 to 209 (YAASEFSFILAVPMMMGATVL), 225 to 245 (MFAVGFVTAFLVALIAIKTFL), and 251 to 271 (ISFVPFAIYRFIVAGVVYMVF).

It belongs to the UppP family.

It is found in the cell inner membrane. It catalyses the reaction di-trans,octa-cis-undecaprenyl diphosphate + H2O = di-trans,octa-cis-undecaprenyl phosphate + phosphate + H(+). Its function is as follows. Catalyzes the dephosphorylation of undecaprenyl diphosphate (UPP). Confers resistance to bacitracin. In Pectobacterium carotovorum subsp. carotovorum (strain PC1), this protein is Undecaprenyl-diphosphatase.